We begin with the raw amino-acid sequence, 158 residues long: C-type lectin galactose-binding isoform (158 aa).

The N-terminal stretch at 1–20 (MGRFLLVTLSLLVVAFSLNG) is a signal peptide. Cystine bridges form between C26–C37, C54–C154, and C129–C146. Positions 33-155 (KNGYCYKVFK…CTALRPFLCQ (123 aa)) constitute a C-type lectin domain. The Ca(2+) site is built by Q119, D121, E127, N142, and D143. The short motif at 119-121 (QPD) is the Galactose-binding element.

It belongs to the true venom lectin family. As to quaternary structure, homodimer; disulfide-linked. Expressed by the venom gland.

Its subcellular location is the secreted. In terms of biological role, galactose-binding lectin that binds to and agglutinates erythrocytes in a calcium-dependent manner. This Hoplocephalus stephensii (Stephens's banded snake) protein is C-type lectin galactose-binding isoform.